Here is a 314-residue protein sequence, read N- to C-terminus: Beta-ketoacyl-[acyl-carrier-protein] synthase III (314 aa).

Active-site residues include C112 and H241. The ACP-binding stretch occupies residues 242-246 (QANIR). The active site involves N271.

This sequence belongs to the thiolase-like superfamily. FabH family. Homodimer.

Its subcellular location is the cytoplasm. It carries out the reaction malonyl-[ACP] + acetyl-CoA + H(+) = 3-oxobutanoyl-[ACP] + CO2 + CoA. The protein operates within lipid metabolism; fatty acid biosynthesis. Functionally, catalyzes the condensation reaction of fatty acid synthesis by the addition to an acyl acceptor of two carbons from malonyl-ACP. Catalyzes the first condensation reaction which initiates fatty acid synthesis and may therefore play a role in governing the total rate of fatty acid production. Possesses both acetoacetyl-ACP synthase and acetyl transacylase activities. Its substrate specificity determines the biosynthesis of branched-chain and/or straight-chain of fatty acids. This is Beta-ketoacyl-[acyl-carrier-protein] synthase III from Vesicomyosocius okutanii subsp. Calyptogena okutanii (strain HA).